The chain runs to 733 residues: MSTAEPAPDPTNPSTSGLAPTTNGIGSPPPTASAATKFSILTKFLRRKNQVHTTTAQQNEFMQKYMPNGNSNAVQPAATGGQPASSDGGSAIEVPPPKESYAVRIRKYLANYTQDPSTDNFYYWTCVVTVAYIYNLLFVIARQVFNDLIGPSSQSLCRFYNGTLNSTTQVECTYNMLTNMKEMPTYSQYPDLGWSKYWHFRMLWVFFDLLMDCVYLIDTFLNYRMGYMDQGLVVREAEKVTKAYWQSKQYRIDGISLIPLDYILGWPIPYINWRGLPILRLNRLIRYKRVRNCLERTETRSSMPNAFRVVVVVWYIVIIIHWNACLYFWISEWIGLGTDAWVYGHLNKQSLPDDITDTLLRRYVYSFYWSTLILTTIGEVPSPVRNIEYAFVTLDLMCGVLIFATIVGNVGSMISNMSAARTEFQNKMDGIKQYMELRKVSKQLEIRVIKWFDYLWTNKQSLSDQQVLKVLPDKLQAEIAMQVHFETLRKVRIFQDCEAGLLAELVLKLQLQVFSPGDFICKKGDIGREMYIVKRGRLQVVDDDGKKVFVTLQEGSVFGELSILNIAGSKNGNRRTANVRSVGYTDLFVLSKTDLWNALREYPDARKLLLAKGREILKKDNLLDENAPEEQKTVEEIAEHLNNAVKVLQTRMARLIVEHSSTEGKLMKRIEMLEKHLSRYKALARRQKTMHGVSIDGGDISTDGVDERVRPPRLRQTKTIDLPTGTESESLLK.

2 disordered regions span residues 1–33 and 67–95; these read MSTA…PTAS and PNGN…IEVP. Residues 1–125 are Cytoplasmic-facing; that stretch reads MSTAEPAPDP…PSTDNFYYWT (125 aa). Polar residues predominate over residues 12 to 25; the sequence is NPSTSGLAPTTNGI. A helical transmembrane segment spans residues 126-148; that stretch reads CVVTVAYIYNLLFVIARQVFNDL. At 149 to 197 the chain is on the extracellular side; sequence IGPSSQSLCRFYNGTLNSTTQVECTYNMLTNMKEMPTYSQYPDLGWSKY. The helical transmembrane segment at 198-217 threads the bilayer; it reads WHFRMLWVFFDLLMDCVYLI. The Cytoplasmic segment spans residues 218–251; it reads DTFLNYRMGYMDQGLVVREAEKVTKAYWQSKQYR. A helical transmembrane segment spans residues 252–265; it reads IDGISLIPLDYILG. The Extracellular portion of the chain corresponds to 266–276; it reads WPIPYINWRGL. Residues 277–287 form a helical membrane-spanning segment; sequence PILRLNRLIRY. The Cytoplasmic portion of the chain corresponds to 288–308; the sequence is KRVRNCLERTETRSSMPNAFR. A helical transmembrane segment spans residues 309–331; the sequence is VVVVVWYIVIIIHWNACLYFWIS. The Extracellular portion of the chain corresponds to 332–362; it reads EWIGLGTDAWVYGHLNKQSLPDDITDTLLRR. 2 helical membrane-spanning segments follow: residues 363–385 and 386–411; these read YVYS…SPVR and NIEY…GNVG. The tract at residues 376 to 379 is selectivity filter; it reads TIGE. Residue Glu-379 participates in Na(+) binding. Residues 412–733 lie on the Cytoplasmic side of the membrane; the sequence is SMISNMSAAR…TGTESESLLK (322 aa). Residues 419–496 form a C-linker region; that stretch reads AARTEFQNKM…TLRKVRIFQD (78 aa). Positions 493 to 607 are cyclic nucleotide-binding domain; the sequence is IFQDCEAGLL…ALREYPDARK (115 aa). Gly-559 serves as a coordination point for 3',5'-cyclic GMP. Glu-560 contacts 3',5'-cyclic AMP. Residues Ser-562, Arg-575, Thr-576, Lys-619, and Asp-620 each contribute to the 3',5'-cyclic GMP site. Arg-575 lines the 3',5'-cyclic AMP pocket. A disordered region spans residues 694–733; sequence SIDGGDISTDGVDERVRPPRLRQTKTIDLPTGTESESLLK.

This sequence belongs to the cyclic nucleotide-gated cation channel (TC 1.A.1.5) family. As to quaternary structure, homotetramer. As to expression, expressed at the sensory endings of thermosensory, gustatory, and olfactory neurons.

It localises to the cell membrane. The protein localises to the cell projection. It is found in the cilium. The catalysed reaction is Ca(2+)(in) = Ca(2+)(out). It carries out the reaction Na(+)(in) = Na(+)(out). The enzyme catalyses K(+)(in) = K(+)(out). In terms of biological role, pore-forming subunit of the cyclic nucleotide-gated channel. Required for normal thermosensation and chemosensation sensory behavior. Required, downstream of receptor-type guanylate cyclase gcy-9, for CO2-mediated responses in BAG neurons. Required, downstream of receptor-type guanylate cyclase gcy-14, for alkaline pH-mediated responses in ASE-left (ASEL) neurons. Involved in the development of ASJ sensory neuron axon during late larval stages and in the maintenance of normal axon morphology in the adult. Regulates dauer formation. Required for the calcium flux to the cytoplasm in the ASJ sensory neurons upon the onset and removal of a nitric oxide (NO) stimulus, thereby promoting the ASJ-mediated behavioral avoidance response to NO-producing organisms like P.aeruginosa. In ASI and ASJ sensory neurons, controls behavioral response to P.aeruginosa by up-regulating the transcription of daf-7, a member of the TGF-beta family. In AWB and AWC sensory neurons, mediates the recognition of food odors which subsequently allows for the detection of preferred food sources. In AWC neurons, acts to promote expression of srsx-3, a member of the GPCR family. Binding to cGMP results in conformational changes at the hydrophobic gate that converts the protein from an inactive closed state to an active open state. This chain is Cyclic nucleotide-gated channel (tax-4), found in Caenorhabditis elegans.